The sequence spans 352 residues: MSLNLTDAADDRSYKEMEKYTVERVAGQGTFGTVQLARDKSTGSLVAIKKVIQDPRFKNRELQIMQHLARLRHPNIVMLKNYFYTVGGEGRRNDVYLNVVMEFVPETLHRTCRNYYRRMTNPPLILVKVFMFQLLRSIACLHIPVINICHRDIKPHNVLVDEQTGELKLCDFGSAKRLAADEPNVAYICSRYYRAPELIFGNQFYTTAVDIWSVGCIFAEMLLGEPIFCGENTSGQLREIVKILGKPTKEELHKLNGSSTEINANAKATPWENVFKQPLPAEVYDLCGKIFKYVPDQRITPLDALCHPFFNELREPTTKLPSGNPLPAHLYQFTPDEVEAMTEAQREYLLKK.

A Protein kinase domain is found at 20–310 (YTVERVAGQG…PLDALCHPFF (291 aa)). ATP-binding positions include 26–34 (AGQGTFGTV) and Lys-49. The active-site Proton acceptor is the Asp-152.

Belongs to the protein kinase superfamily. CMGC Ser/Thr protein kinase family. GSK-3 subfamily. As to quaternary structure, inhibited by cyclin kinase 2 (CDK2) inhibitors, including GW8510.

The enzyme catalyses L-seryl-[tau protein] + ATP = O-phospho-L-seryl-[tau protein] + ADP + H(+). It catalyses the reaction L-threonyl-[tau protein] + ATP = O-phospho-L-threonyl-[tau protein] + ADP + H(+). The chain is Glycogen synthase kinase 3 from Trypanosoma brucei brucei (strain 927/4 GUTat10.1).